Here is a 299-residue protein sequence, read N- to C-terminus: Nitrogenase iron protein (299 aa).

11-18 (GKGGIGKS) contributes to the ATP binding site. Cysteine 99 is a [4Fe-4S] cluster binding site. An ADP-ribosylarginine; by dinitrogenase reductase ADP-ribosyltransferase modification is found at arginine 102. [4Fe-4S] cluster is bound at residue cysteine 133.

This sequence belongs to the NifH/BchL/ChlL family. Homodimer. The cofactor is [4Fe-4S] cluster. Post-translationally, the reversible ADP-ribosylation of Arg-102 inactivates the nitrogenase reductase and regulates nitrogenase activity.

The enzyme catalyses N2 + 8 reduced [2Fe-2S]-[ferredoxin] + 16 ATP + 16 H2O = H2 + 8 oxidized [2Fe-2S]-[ferredoxin] + 2 NH4(+) + 16 ADP + 16 phosphate + 6 H(+). Its function is as follows. The key enzymatic reactions in nitrogen fixation are catalyzed by the nitrogenase complex, which has 2 components: the iron protein and the molybdenum-iron protein. The protein is Nitrogenase iron protein of Methylobacterium nodulans (strain LMG 21967 / CNCM I-2342 / ORS 2060).